The chain runs to 385 residues: Flap endonuclease 1 (385 aa).

The N-domain stretch occupies residues 1–104; the sequence is MGILGLSKLI…GELAKRAERR (104 aa). Residue D34 participates in Mg(2+) binding. DNA contacts are provided by R47 and R70. Residues D86, E158, E160, D179, and D181 each coordinate Mg(2+). Positions 122–253 are I-domain; it reads GIEKFNRRLV…KRAIELINTY (132 aa). Residue E158 participates in DNA binding. DNA contacts are provided by G231 and D233. D233 contacts Mg(2+). The interval 336–344 is interaction with PCNA; it reads TQVRLDSFF. Residues 346 to 385 are disordered; that stretch reads TLPSTPNATNAAKRKAEEAKKSANNKKAKTSGGGRGRRPK. Residues 368–385 are compositionally biased toward basic residues; the sequence is ANNKKAKTSGGGRGRRPK.

Belongs to the XPG/RAD2 endonuclease family. FEN1 subfamily. As to quaternary structure, interacts with PCNA. Three molecules of FEN1 bind to one PCNA trimer with each molecule binding to one PCNA monomer. PCNA stimulates the nuclease activity without altering cleavage specificity. The cofactor is Mg(2+). In terms of processing, phosphorylated. Phosphorylation upon DNA damage induces relocalization to the nuclear plasma.

The protein resides in the nucleus. It is found in the nucleolus. Its subcellular location is the nucleoplasm. The protein localises to the mitochondrion. Its function is as follows. Structure-specific nuclease with 5'-flap endonuclease and 5'-3' exonuclease activities involved in DNA replication and repair. During DNA replication, cleaves the 5'-overhanging flap structure that is generated by displacement synthesis when DNA polymerase encounters the 5'-end of a downstream Okazaki fragment. It enters the flap from the 5'-end and then tracks to cleave the flap base, leaving a nick for ligation. Also involved in the long patch base excision repair (LP-BER) pathway, by cleaving within the apurinic/apyrimidinic (AP) site-terminated flap. Acts as a genome stabilization factor that prevents flaps from equilibrating into structures that lead to duplications and deletions. Also possesses 5'-3' exonuclease activity on nicked or gapped double-stranded DNA, and exhibits RNase H activity. Also involved in replication and repair of rDNA and in repairing mitochondrial DNA. This Drosophila simulans (Fruit fly) protein is Flap endonuclease 1.